Reading from the N-terminus, the 507-residue chain is Nuclear distribution protein PAC1 (507 aa).

The stretch at 72-98 (STVLRLQRKIMDLTDEVSNLKTIIEAK) forms a coiled coil. WD repeat units follow at residues 125–164 (QTHQ…PSIP), 170–222 (AHSR…QIRI), 225–265 (GHDH…CTRT), 268–312 (GHSD…GLCL), 315–389 (GHSH…VRPN), 410–449 (GHQS…TGGR), and 474–507 (PKDT…RLWS).

This sequence belongs to the WD repeat LIS1/nudF family. As to quaternary structure, self-associates. Interacts with NDL1 and dynein.

It is found in the cytoplasm. The protein localises to the cytoskeleton. The protein resides in the spindle pole. Its function is as follows. Positively regulates the activity of the minus-end directed microtubule motor protein dynein. Plays a central role in positioning the mitotic spindle at the bud neck during cell division. Targets cytoplasmic dynein to microtubule plus ends, thereby promoting dynein-mediated microtubule sliding along the bud cortex and consequently the movement of the mitotic spindle to the bud neck. The protein is Nuclear distribution protein PAC1 of Meyerozyma guilliermondii (strain ATCC 6260 / CBS 566 / DSM 6381 / JCM 1539 / NBRC 10279 / NRRL Y-324) (Yeast).